Consider the following 213-residue polypeptide: Orotate phosphoribosyltransferase (213 aa).

Lysine 26 is a binding site for 5-phospho-alpha-D-ribose 1-diphosphate. 34–35 (FF) is an orotate binding site. 5-phospho-alpha-D-ribose 1-diphosphate is bound by residues 72-73 (YK), arginine 99, lysine 100, lysine 103, histidine 105, and 124-132 (DDVITAGTA). Residues threonine 128 and arginine 156 each coordinate orotate.

This sequence belongs to the purine/pyrimidine phosphoribosyltransferase family. PyrE subfamily. In terms of assembly, homodimer. It depends on Mg(2+) as a cofactor.

It carries out the reaction orotidine 5'-phosphate + diphosphate = orotate + 5-phospho-alpha-D-ribose 1-diphosphate. It functions in the pathway pyrimidine metabolism; UMP biosynthesis via de novo pathway; UMP from orotate: step 1/2. Its function is as follows. Catalyzes the transfer of a ribosyl phosphate group from 5-phosphoribose 1-diphosphate to orotate, leading to the formation of orotidine monophosphate (OMP). This Haemophilus influenzae (strain 86-028NP) protein is Orotate phosphoribosyltransferase.